Here is a 246-residue protein sequence, read N- to C-terminus: 3-deoxy-manno-octulosonate cytidylyltransferase (246 aa).

It belongs to the KdsB family.

It is found in the cytoplasm. The catalysed reaction is 3-deoxy-alpha-D-manno-oct-2-ulosonate + CTP = CMP-3-deoxy-beta-D-manno-octulosonate + diphosphate. The protein operates within nucleotide-sugar biosynthesis; CMP-3-deoxy-D-manno-octulosonate biosynthesis; CMP-3-deoxy-D-manno-octulosonate from 3-deoxy-D-manno-octulosonate and CTP: step 1/1. It participates in bacterial outer membrane biogenesis; lipopolysaccharide biosynthesis. Activates KDO (a required 8-carbon sugar) for incorporation into bacterial lipopolysaccharide in Gram-negative bacteria. In Rickettsia africae (strain ESF-5), this protein is 3-deoxy-manno-octulosonate cytidylyltransferase.